Reading from the N-terminus, the 492-residue chain is Heat shock factor protein 4 (492 aa).

A DNA-binding region spans residues 17-121; sequence VPAFLGKLWA…QLLERVRRKV (105 aa). The hydrophobic repeat HR-A/B stretch occupies residues 129 to 203; sequence GRWRPEDLGR…GPLQTGSSGA (75 aa). The interactions with DUSP26, MAPK1 and MAPK2 stretch occupies residues 245 to 323; it reads LPETTLGLSS…ECDFCVTAPP (79 aa). Positions 250 to 286 are disordered; the sequence is LGLSSSHRTRGPIISDIHEDSPSPDGTRLSPSSGGRR. Residue lysine 294 forms a Glycyl lysine isopeptide (Lys-Gly) (interchain with G-Cter in SUMO) linkage. Phosphoserine is present on serine 299. The interval 337-378 is disordered; it reads KGNFSPEGPRNAQQPEPRGPREVPDRGTLGLDRGARSPENLL. A hydrophobic repeat HR-C region spans residues 365–390; it reads LGLDRGARSPENLLPPMLLRAPPESV.

It belongs to the HSF family. In terms of assembly, homotrimer. Exhibits constitutive DNA binding and forms trimers even in the absence of stress. Interacts with ALKBH4, DUSP26, MAPK1, MAPK2, MAPK8 and MAP kinase p38. Post-translationally, phosphorylated mainly on serine residues. Phosphorylation on Ser-299 promotes sumoylation on Lys-294. In terms of processing, constitutively sumoylated. Sumoylation represses the transcriptional activity and is promoted by phosphorylation on Ser-299.

The protein localises to the nucleus. In terms of biological role, heat-shock transcription factor that specifically binds heat shock promoter elements (HSE). Required for denucleation and organelle rupture and degradation that occur during eye lens terminal differentiation, when fiber cells that compose the lens degrade all membrane-bound organelles in order to provide lens with transparency to allow the passage of light. In this process, may regulate denucleation of lens fiber cells in part by activating DNASE2B transcription. May be involved in DNA repair through the transcriptional regulation of RAD51. May up-regulate p53/TP53 protein in eye lens fiber cells, possibly through protein stabilization. In the eye lens, controls the expression of alpha-crystallin B chain/CRYAB and consequently may be involved in the regulation of lysosomal acidification. The protein is Heat shock factor protein 4 (HSF4) of Canis lupus familiaris (Dog).